Here is a 438-residue protein sequence, read N- to C-terminus: Transposon Ty2-GR1 Gag polyprotein (438 aa).

3 stretches are compositionally biased toward polar residues: residues 1-11 (MESQQLHQNPH), 19-39 (ASVT…SASN), and 49-60 (KVNSQQETTPGT). 3 disordered regions span residues 1 to 86 (MESQ…GQYQ), 360 to 403 (HSEY…ATSS), and 418 to 438 (VSSQ…TERI). Residues 295-397 (ENNINVSDRL…SSKPRAAKAH (103 aa)) are RNA-binding. Low complexity predominate over residues 369-381 (TSPNTTNTKVTTR).

Homotrimer.

It localises to the cytoplasm. Its function is as follows. Capsid protein (CA) is the structural component of the virus-like particle (VLP), forming the shell that encapsulates the retrotransposons dimeric RNA genome. The particles are assembled from trimer-clustered units and there are holes in the capsid shells that allow for the diffusion of macromolecules. CA also has nucleocapsid-like chaperone activity, promoting primer tRNA(i)-Met annealing to the multipartite primer-binding site (PBS), dimerization of Ty2 RNA and initiation of reverse transcription. This is Transposon Ty2-GR1 Gag polyprotein (TY2A-GR1) from Saccharomyces cerevisiae (strain ATCC 204508 / S288c) (Baker's yeast).